The sequence spans 403 residues: Na(+)-translocating NADH-quinone reductase subunit B (403 aa).

Transmembrane regions (helical) follow at residues 56–76 (MMILVWLCTFPAMFFGMWNTG), 121–141 (AYFLPIYAVTFIVGGFWEVLF), 164–184 (LPPSIPLWQVAMGISFGVVIG), and 195–212 (FLNPALVGRAFLFFAYPA). Threonine 230 carries the FMN phosphoryl threonine modification. The next 6 helical transmembrane spans lie at 237–257 (AGGVEGVVSAGVSWMDAFLGI), 265–285 (TSTLAILIGGAVLLLTKIAAW), 287–307 (IVAGVMVGMVVLSSLFNLIGS), 312–332 (MFAMPWYWHLVAGGFAFGTLF), 348–368 (WAFGILIGVMVVLIRVVNPAF), and 371–391 (GMMLAILFGNLCAPLIDHFVV).

The protein belongs to the NqrB/RnfD family. As to quaternary structure, composed of six subunits; NqrA, NqrB, NqrC, NqrD, NqrE and NqrF. The cofactor is FMN.

Its subcellular location is the cell inner membrane. The enzyme catalyses a ubiquinone + n Na(+)(in) + NADH + H(+) = a ubiquinol + n Na(+)(out) + NAD(+). Its function is as follows. NQR complex catalyzes the reduction of ubiquinone-1 to ubiquinol by two successive reactions, coupled with the transport of Na(+) ions from the cytoplasm to the periplasm. NqrA to NqrE are probably involved in the second step, the conversion of ubisemiquinone to ubiquinol. The chain is Na(+)-translocating NADH-quinone reductase subunit B from Azotobacter vinelandii (strain DJ / ATCC BAA-1303).